The sequence spans 544 residues: Baeyer-Villiger monooxygenase (544 aa).

FAD-binding residues include Phe27, Glu47, Trp56, Asp67, Tyr73, and Val119.

The protein belongs to the FAD-binding monooxygenase family. It depends on FAD as a cofactor.

Its function is as follows. Catalyzes a Baeyer-Villiger oxidation reaction, i.e. the insertion of an oxygen atom into a carbon-carbon bond adjacent to a carbonyl, which converts ketones to esters or lactones using NADPH as an electron donor. Besides cycloalkanones, can use cyclic alpha,beta-unsaturated ketones as substrates, leading to enol-lactones. Can also act on methylated cycloalkanones and methylated cycloalkenones with high enantioselectivity in some cases. The chain is Baeyer-Villiger monooxygenase from Parvibaculum lavamentivorans (strain DS-1 / DSM 13023 / NCIMB 13966).